The primary structure comprises 496 residues: FAD-linked oxidoreductase AFUA_1G00980 (496 aa).

The N-terminal stretch at 1–21 is a signal peptide; the sequence is MRRATLIPLAIWVAGAAAAAA. Residues Asn49, Asn122, Asn205, Asn258, Asn344, Asn351, Asn371, and Asn382 are each glycosylated (N-linked (GlcNAc...) asparagine). The FAD-binding PCMH-type domain maps to 64–243; that stretch reads MAPTYAVSVR…VEAVYQVTDL (180 aa).

Belongs to the oxygen-dependent FAD-linked oxidoreductase family. The cofactor is FAD.

Its function is as follows. FAD-linked oxidoreductase; part of the gene cluster that mediates the biosynthesis of fumigermin that inhibits germination of spores of the inducing S.rapamycinicus, and thus helps the fungus to defend resources in the shared habitat against a bacterial competitor. The partially reducing polyketide synthase fngA alone is sufficient for the production of fumigermin. FgnA catalyzes the condensation of 3 malonyl-CoA units to an acetyl-CoA starter, and 3 methylations to yield fumigermin. It is remarkable that the five cluster genes including fgnA are conserved in distantly related fungi, supporting the assumption of a fumigermin cluster; it is thus possible that originally all five genes were functional, but that the genes encoding tailoring enzymes became inactive from mutations, similar to the case of the fgnA gene in strains A1163 and Af293. The protein is FAD-linked oxidoreductase AFUA_1G00980 of Aspergillus fumigatus (strain ATCC MYA-4609 / CBS 101355 / FGSC A1100 / Af293) (Neosartorya fumigata).